We begin with the raw amino-acid sequence, 122 residues long: Cytochrome b-c1 complex subunit 7-1, mitochondrial (122 aa).

The protein belongs to the UQCRB/QCR7 family. In terms of assembly, component of the ubiquinol-cytochrome c oxidoreductase (cytochrome b-c1 complex, complex III, CIII), a multisubunit enzyme composed of 10 subunits. The complex is composed of 3 respiratory subunits cytochrome b (MT-CYB), cytochrome c1 (CYC1-1 or CYC1-2) and Rieske protein (UCR1-1 or UCR1-2), 2 core protein subunits MPPalpha1 (or MPPalpha2) and MPPB, and 5 low-molecular weight protein subunits QCR7-1 (or QCR7-2), UCRQ-1 (or UCRQ-2), QCR9, UCRY and probably QCR6-1 (or QCR6-2). The complex exists as an obligatory dimer and forms supercomplexes (SCs) in the inner mitochondrial membrane with NADH-ubiquinone oxidoreductase (complex I, CI), resulting in different assemblies (supercomplexes SCI(1)III(2) and SCI(2)III(4)).

The protein resides in the mitochondrion inner membrane. Its function is as follows. Component of the ubiquinol-cytochrome c oxidoreductase, a multisubunit transmembrane complex that is part of the mitochondrial electron transport chain which drives oxidative phosphorylation. The respiratory chain contains 3 multisubunit complexes succinate dehydrogenase (complex II, CII), ubiquinol-cytochrome c oxidoreductase (cytochrome b-c1 complex, complex III, CIII) and cytochrome c oxidase (complex IV, CIV), that cooperate to transfer electrons derived from NADH and succinate to molecular oxygen, creating an electrochemical gradient over the inner membrane that drives transmembrane transport and the ATP synthase. The cytochrome b-c1 complex catalyzes electron transfer from ubiquinol to cytochrome c, linking this redox reaction to translocation of protons across the mitochondrial inner membrane, with protons being carried across the membrane as hydrogens on the quinol. In the process called Q cycle, 2 protons are consumed from the matrix, 4 protons are released into the intermembrane space and 2 electrons are passed to cytochrome c. The sequence is that of Cytochrome b-c1 complex subunit 7-1, mitochondrial (QCR7-1) from Arabidopsis thaliana (Mouse-ear cress).